The following is a 307-amino-acid chain: Putative oxidoreductase YceM (307 aa).

Belongs to the Gfo/Idh/MocA family.

This is Putative oxidoreductase YceM (yceM) from Escherichia coli (strain K12).